The chain runs to 132 residues: uncharacterized protein (132 aa).

Residues methionine 1–threonine 34 form a disordered region.

To M.tuberculosis Rv2656c.

This is an uncharacterized protein from Mycobacterium tuberculosis (strain CDC 1551 / Oshkosh).